The sequence spans 179 residues: MFVSLSEKKKFLTWLVNTAPFGRREVLWILNYLLTHDAILNNVHFVENVEKTDRGIRVVADGLGKEPLLLFIQAQEFTDPEQIFHEIRMNWRKALYLECVFPEAWQTSQYLSVLEDNPFAPWNEQVDQEVARAIDQYFKQEEQTQRMALLKAQIDDALETGNKEAFLELSDELNRLKQQ.

It belongs to the UPF0302 family.

This is UPF0302 protein EF_1554 from Enterococcus faecalis (strain ATCC 700802 / V583).